We begin with the raw amino-acid sequence, 623 residues long: NADPH-dependent diflavin oxidoreductase 1 (623 aa).

In terms of domain architecture, Flavodoxin-like spans 8-153 (LLVLYASQTG…TLDPWMLSLW (146 aa)). FMN-binding positions include 14–19 (SQTGNA), 62–65 (STTG), and Asp-135. The FAD-binding FR-type domain occupies 221 to 467 (KPDCFLKMTR…SLPAPSQSLP (247 aa)). Residues Arg-369, 399-402 (RAFS), and 433-436 (GLCS) contribute to the FAD site. NADP(+) is bound by residues Thr-475, 541–542 (SR), 547–551 (KVYVQ), and Asp-583. Trp-622 is a binding site for FAD.

Belongs to the NADPH-dependent diflavin oxidoreductase NDOR1 family. The protein in the N-terminal section; belongs to the flavodoxin family. This sequence in the C-terminal section; belongs to the flavoprotein pyridine nucleotide cytochrome reductase family. Interacts with At5g18400. FAD serves as cofactor. Requires FMN as cofactor. In terms of tissue distribution, widely expressed.

The protein resides in the cytoplasm. It is found in the nucleus. The enzyme catalyses 2 oxidized [2Fe-2S]-[protein] + NADPH = 2 reduced [2Fe-2S]-[protein] + NADP(+) + H(+). NADPH-dependent reductase which is a central component of the cytosolic iron-sulfur (Fe-S) protein assembly (CIA) machinery. Transfers electrons from NADPH via its FAD and FMN prosthetic groups to the [2Fe-2S] cluster of the anamorsin/DRE2 homolog, another key component of the CIA machinery. In turn, this reduced cluster provides electrons for assembly of cytosolic iron-sulfur cluster proteins. Catalyzes the NADP-dependent reduction of cytochrome c, but not cytochrome P450 in vitro. Required for embryo development. In Arabidopsis thaliana (Mouse-ear cress), this protein is NADPH-dependent diflavin oxidoreductase 1 (ATR3).